The sequence spans 729 residues: Phosphoribosylformylglycinamidine synthase subunit PurL (729 aa).

His-54 is an active-site residue. ATP-binding residues include Tyr-57 and Lys-96. Glu-98 serves as a coordination point for Mg(2+). Residues 99 to 102 (SHNH) and Arg-121 contribute to the substrate site. Catalysis depends on His-100, which acts as the Proton acceptor. Asp-122 contributes to the Mg(2+) binding site. Gln-245 is a substrate binding site. Position 273 (Asp-273) interacts with Mg(2+). 317–319 (ETQ) lines the substrate pocket. ATP-binding residues include Asp-495 and Gly-532. Asn-533 lines the Mg(2+) pocket. Ser-535 provides a ligand contact to substrate.

It belongs to the FGAMS family. In terms of assembly, monomer. Part of the FGAM synthase complex composed of 1 PurL, 1 PurQ and 2 PurS subunits.

Its subcellular location is the cytoplasm. The enzyme catalyses N(2)-formyl-N(1)-(5-phospho-beta-D-ribosyl)glycinamide + L-glutamine + ATP + H2O = 2-formamido-N(1)-(5-O-phospho-beta-D-ribosyl)acetamidine + L-glutamate + ADP + phosphate + H(+). Its pathway is purine metabolism; IMP biosynthesis via de novo pathway; 5-amino-1-(5-phospho-D-ribosyl)imidazole from N(2)-formyl-N(1)-(5-phospho-D-ribosyl)glycinamide: step 1/2. Part of the phosphoribosylformylglycinamidine synthase complex involved in the purines biosynthetic pathway. Catalyzes the ATP-dependent conversion of formylglycinamide ribonucleotide (FGAR) and glutamine to yield formylglycinamidine ribonucleotide (FGAM) and glutamate. The FGAM synthase complex is composed of three subunits. PurQ produces an ammonia molecule by converting glutamine to glutamate. PurL transfers the ammonia molecule to FGAR to form FGAM in an ATP-dependent manner. PurS interacts with PurQ and PurL and is thought to assist in the transfer of the ammonia molecule from PurQ to PurL. This is Phosphoribosylformylglycinamidine synthase subunit PurL from Staphylococcus epidermidis (strain ATCC 35984 / DSM 28319 / BCRC 17069 / CCUG 31568 / BM 3577 / RP62A).